The chain runs to 315 residues: Homoserine kinase (315 aa).

Residue Pro-97 to Thr-107 coordinates ATP.

Belongs to the GHMP kinase family. Homoserine kinase subfamily.

It localises to the cytoplasm. The enzyme catalyses L-homoserine + ATP = O-phospho-L-homoserine + ADP + H(+). It functions in the pathway amino-acid biosynthesis; L-threonine biosynthesis; L-threonine from L-aspartate: step 4/5. In terms of biological role, catalyzes the ATP-dependent phosphorylation of L-homoserine to L-homoserine phosphate. The chain is Homoserine kinase from Synechococcus sp. (strain CC9311).